Reading from the N-terminus, the 428-residue chain is Light-independent protochlorophyllide reductase subunit N (428 aa).

Residues cysteine 29, cysteine 54, and cysteine 115 each contribute to the [4Fe-4S] cluster site.

Belongs to the BchN/ChlN family. As to quaternary structure, protochlorophyllide reductase is composed of three subunits; BchL, BchN and BchB. Forms a heterotetramer of two BchB and two BchN subunits. [4Fe-4S] cluster is required as a cofactor.

The enzyme catalyses chlorophyllide a + oxidized 2[4Fe-4S]-[ferredoxin] + 2 ADP + 2 phosphate = protochlorophyllide a + reduced 2[4Fe-4S]-[ferredoxin] + 2 ATP + 2 H2O. The protein operates within porphyrin-containing compound metabolism; bacteriochlorophyll biosynthesis (light-independent). Its function is as follows. Component of the dark-operative protochlorophyllide reductase (DPOR) that uses Mg-ATP and reduced ferredoxin to reduce ring D of protochlorophyllide (Pchlide) to form chlorophyllide a (Chlide). This reaction is light-independent. The NB-protein (BchN-BchB) is the catalytic component of the complex. The polypeptide is Light-independent protochlorophyllide reductase subunit N (Roseobacter denitrificans (strain ATCC 33942 / OCh 114) (Erythrobacter sp. (strain OCh 114))).